The following is a 134-amino-acid chain: Ribosome-binding factor A (134 aa).

This sequence belongs to the RbfA family. Monomer. Binds 30S ribosomal subunits, but not 50S ribosomal subunits or 70S ribosomes.

The protein localises to the cytoplasm. Functionally, one of several proteins that assist in the late maturation steps of the functional core of the 30S ribosomal subunit. Associates with free 30S ribosomal subunits (but not with 30S subunits that are part of 70S ribosomes or polysomes). Required for efficient processing of 16S rRNA. May interact with the 5'-terminal helix region of 16S rRNA. The chain is Ribosome-binding factor A from Psychrobacter cryohalolentis (strain ATCC BAA-1226 / DSM 17306 / VKM B-2378 / K5).